The primary structure comprises 497 residues: tRNA-2-methylthio-N(6)-dimethylallyladenosine synthase (497 aa).

The span at 1 to 10 (MTLLDSDSRQ) shows a compositional bias: basic and acidic residues. The interval 1–26 (MTLLDSDSRQSAEVLPAAGPAPDRPR) is disordered. The MTTase N-terminal domain maps to 26–142 (RTYQVRTFGC…LPVLLERARI (117 aa)). 6 residues coordinate [4Fe-4S] cluster: Cys35, Cys71, Cys105, Cys179, Cys183, and Cys186. The region spanning 165–395 (RESVYAAWVA…VALVEQIALE (231 aa)) is the Radical SAM core domain. A TRAM domain is found at 398–464 (QAQVGRVVEV…PHCLIADQVL (67 aa)).

Belongs to the methylthiotransferase family. MiaB subfamily. Monomer. [4Fe-4S] cluster serves as cofactor.

It is found in the cytoplasm. The enzyme catalyses N(6)-dimethylallyladenosine(37) in tRNA + (sulfur carrier)-SH + AH2 + 2 S-adenosyl-L-methionine = 2-methylsulfanyl-N(6)-dimethylallyladenosine(37) in tRNA + (sulfur carrier)-H + 5'-deoxyadenosine + L-methionine + A + S-adenosyl-L-homocysteine + 2 H(+). Catalyzes the methylthiolation of N6-(dimethylallyl)adenosine (i(6)A), leading to the formation of 2-methylthio-N6-(dimethylallyl)adenosine (ms(2)i(6)A) at position 37 in tRNAs that read codons beginning with uridine. The chain is tRNA-2-methylthio-N(6)-dimethylallyladenosine synthase from Acidothermus cellulolyticus (strain ATCC 43068 / DSM 8971 / 11B).